The sequence spans 1378 residues: Disease resistance protein RRS1 (1378 aa).

One can recognise a TIR domain in the interval 5 to 146; that stretch reads EKDEEFVCIS…EIVRDVYETH (142 aa). The 252-residue stretch at 170-421 folds into the NB-ARC domain; the sequence is IGIRCVGIWG…LLEGCGFFPH (252 aa). 179 to 186 lines the ATP pocket; that stretch reads GMPGIGKT. LRR repeat units follow at residues 498 to 522, 535 to 553, 554 to 575, 577 to 598, 621 to 646, 665 to 688, 742 to 766, 768 to 793, and 831 to 854; these read SEEIEGLFLDTSNLRFDLQPSAFKN, NPEVHPVINFPTGSLHSLP, NELRLLHWENYPLKSLPQNFDP, HLVEINMPYSQLQKLWGGTKNL, AENLEVIDLQGCTRLQNFPAAGRLLR, PPNIEKLHLQGTGILALPVSTVKP, LPNMANLDLNVLDLSGCSSLNSIQG, PRFLKQLYLGGTAIREVPQLPQSLEI, and PRNLKELYFAGTTLREVPQLPLSL. Residues 988–1005 carry the Nuclear localization signal motif; sequence RNFHCWAPGKVVPKVRKD. A DNA-binding region (WRKY) is located at residues 1204–1272; it reads IPAIDEGDLW…YLSEHNHPRP (69 aa). A disordered region spans residues 1300–1321; that stretch reads RVFQNKDEPNQPHLPSSSTPPR.

In terms of assembly, interacts with PopP2, a R.solanacearum type III effector.

The protein resides in the nucleus. The protein localises to the cytoplasm. Transcription factor. Interacts specifically with the W box (5'-(T)TGAC[CT]-3'), a frequently occurring elicitor-responsive cis-acting element. Also acts as a disease resistance protein involved in resistance to fungal and bacterial pathogens, including R.solanacearum, P.syringae pv. tomato and C.higginsianum. RRS1 mediated resistance depends on salicylic acid and NDR1 (AC O48915). The sequence is that of Disease resistance protein RRS1 from Arabidopsis thaliana (Mouse-ear cress).